The following is a 314-amino-acid chain: MTAAVRPLPIIGPTGTGKSQLALDVAERLGPLGAEIVNADAMQLYRGMDIGTAKLPVDARRGIPHHQLDVLDVTQTATVARYQRAAAADIEAILAAGAVPIIVGGSMLYIQSLLDDWSFPATDPRVRARWERRLGEVGVGELHAELARRDPAAAAAILPTDARRTVRALEVIELTGRPFAASAPRIGAPRWDTVIIGLDCDTTLLDERLARRTDAMFEQGLVAEVTGLLGRGLRDGVTAARALGYAQVIAALDAGGGDEQLRQAREQTYAGTRRYVRRQRSWFRRDHRVRWLDAGACSPPRLADAALEAWRHVS.

12 to 19 (GPTGTGKS) is an ATP binding site. Residue 14–19 (TGTGKS) coordinates substrate.

Belongs to the IPP transferase family. Monomer. The cofactor is Mg(2+).

It catalyses the reaction adenosine(37) in tRNA + dimethylallyl diphosphate = N(6)-dimethylallyladenosine(37) in tRNA + diphosphate. Its function is as follows. Catalyzes the transfer of a dimethylallyl group onto the adenine at position 37 in tRNAs that read codons beginning with uridine, leading to the formation of N6-(dimethylallyl)adenosine (i(6)A). The chain is tRNA dimethylallyltransferase from Mycolicibacterium paratuberculosis (strain ATCC BAA-968 / K-10) (Mycobacterium paratuberculosis).